The chain runs to 207 residues: LexA repressor (207 aa).

Residues 28 to 48 (RAEIARHLGFKSANAAEEHLK) constitute a DNA-binding region (H-T-H motif). Catalysis depends on for autocatalytic cleavage activity residues Ser124 and Lys161.

This sequence belongs to the peptidase S24 family. In terms of assembly, homodimer.

The catalysed reaction is Hydrolysis of Ala-|-Gly bond in repressor LexA.. Functionally, represses a number of genes involved in the response to DNA damage (SOS response), including recA and lexA. In the presence of single-stranded DNA, RecA interacts with LexA causing an autocatalytic cleavage which disrupts the DNA-binding part of LexA, leading to derepression of the SOS regulon and eventually DNA repair. This chain is LexA repressor, found in Pseudoalteromonas atlantica (strain T6c / ATCC BAA-1087).